The sequence spans 306 residues: Putative HPr kinase/phosphorylase 2 (306 aa).

Catalysis depends on residues histidine 138 and lysine 159. 153-160 (GESGVGKS) provides a ligand contact to ATP. Residue serine 160 coordinates Mg(2+). Catalysis depends on aspartate 177, which acts as the Proton acceptor; for phosphorylation activity. Proton donor; for dephosphorylation activity. An important for the catalytic mechanism of both phosphorylation and dephosphorylation region spans residues 201–210 (LALRSVGLLN). Positions 264-269 (QLQPGR) are important for the catalytic mechanism of dephosphorylation.

This sequence belongs to the HPrK/P family. As to quaternary structure, homohexamer. The cofactor is Mg(2+).

It carries out the reaction [HPr protein]-L-serine + ATP = [HPr protein]-O-phospho-L-serine + ADP + H(+). It catalyses the reaction [HPr protein]-O-phospho-L-serine + phosphate + H(+) = [HPr protein]-L-serine + diphosphate. Functionally, catalyzes the ATP- as well as the pyrophosphate-dependent phosphorylation of a specific serine residue in HPr, a phosphocarrier protein of the phosphoenolpyruvate-dependent sugar phosphotransferase system (PTS). HprK/P also catalyzes the pyrophosphate-producing, inorganic phosphate-dependent dephosphorylation (phosphorolysis) of seryl-phosphorylated HPr (P-Ser-HPr). The two antagonistic activities of HprK/P are regulated by several intracellular metabolites, which change their concentration in response to the absence or presence of rapidly metabolisable carbon sources (glucose, fructose, etc.) in the growth medium. Also phosphorylates/dephosphorylates the HPr-like catabolite repression protein crh on a specific serine residue. Therefore, by controlling the phosphorylation state of HPr and crh, HPrK/P is a sensor enzyme that plays a major role in the regulation of carbon metabolism and sugar transport: it mediates carbon catabolite repression (CCR), and regulates PTS-catalyzed carbohydrate uptake and inducer exclusion. The chain is Putative HPr kinase/phosphorylase 2 (hprK2) from Oceanobacillus iheyensis (strain DSM 14371 / CIP 107618 / JCM 11309 / KCTC 3954 / HTE831).